The primary structure comprises 156 residues: Probable low-salt glycan biosynthesis epimerase Agl13 (156 aa).

Residues Arg-19, Glu-24, 39–41, Arg-51, His-54, and His-109 contribute to the substrate site; that span reads MSY.

It belongs to the dTDP-4-dehydrorhamnose 3,5-epimerase family.

It functions in the pathway protein modification; protein glycosylation. It participates in cell surface structure biogenesis; S-layer biogenesis. Functionally, epimerase involved in N-glycan biosynthetic pathway that takes place under low-salt conditions (1.75 M instead of 3.4 M). Participates in the formation of the tetrasaccharide present at 'Asn-532' of S-layer glycoprotein Csg, consisting of a sulfated hexose, 2 hexoses and rhamnose. Involved in the addition of final rhamnose (sugar 4) of the tetrasaccharide on the dolichol phosphate carrier. The chain is Probable low-salt glycan biosynthesis epimerase Agl13 (agl13) from Haloferax volcanii (strain ATCC 29605 / DSM 3757 / JCM 8879 / NBRC 14742 / NCIMB 2012 / VKM B-1768 / DS2) (Halobacterium volcanii).